We begin with the raw amino-acid sequence, 492 residues long: Acyl-CoA-binding domain-containing protein 5 (492 aa).

Residues 8-97 (HATRFEAAVK…MKKILESMPM (90 aa)) enclose the ACB domain. An acyl-CoA-binding positions include 19–28 (IQSLPKNGSF), 39–43 (YSFYK), lysine 65, and tyrosine 84. 2 disordered regions span residues 141–162 (AVNG…GLRE) and 335–399 (VKCG…DRGP). Over residues 153-162 (AESEEEGLRE) the composition is skewed to acidic residues. Over residues 335–360 (VKCGGEDGKASNGAPHKEKKDGEKAD) the composition is skewed to basic and acidic residues. The span at 378-388 (GSQGGQMGNGG) shows a compositional bias: gly residues. A compositionally biased stretch (basic and acidic residues) spans 389–399 (DGERWGSDRGP). Residues 405–431 (EQIAVVLMRLQEDMQNVLQRLHMLEAV) are a coiled coil. Residues 464-484 (GVLAFAIVWPFIAQWLVHVYL) traverse the membrane as a helical segment.

Belongs to the ATG37 family.

It localises to the peroxisome membrane. Its function is as follows. Acyl-CoA binding protein which acts as the peroxisome receptor for pexophagy but is dispensable for aggrephagy and nonselective autophagy. Binds medium- and long-chain acyl-CoA esters. The chain is Acyl-CoA-binding domain-containing protein 5 (ACBD5) from Gallus gallus (Chicken).